A 330-amino-acid polypeptide reads, in one-letter code: DNA-directed RNA polymerase subunit alpha (330 aa).

An alpha N-terminal domain (alpha-NTD) region spans residues 1–231 (MAILAFQKPD…IYHFMLFSDE (231 aa)). Positions 253–330 (MRQLLKTKLV…DISKYKLDKE (78 aa)) are alpha C-terminal domain (alpha-CTD).

The protein belongs to the RNA polymerase alpha chain family. Homodimer. The RNAP catalytic core consists of 2 alpha, 1 beta, 1 beta' and 1 omega subunit. When a sigma factor is associated with the core the holoenzyme is formed, which can initiate transcription.

The enzyme catalyses RNA(n) + a ribonucleoside 5'-triphosphate = RNA(n+1) + diphosphate. Its function is as follows. DNA-dependent RNA polymerase catalyzes the transcription of DNA into RNA using the four ribonucleoside triphosphates as substrates. The protein is DNA-directed RNA polymerase subunit alpha of Phocaeicola vulgatus (strain ATCC 8482 / DSM 1447 / JCM 5826 / CCUG 4940 / NBRC 14291 / NCTC 11154) (Bacteroides vulgatus).